Reading from the N-terminus, the 152-residue chain is UPF0311 protein blr7842 (152 aa).

The protein belongs to the UPF0311 family.

The protein is UPF0311 protein blr7842 of Bradyrhizobium diazoefficiens (strain JCM 10833 / BCRC 13528 / IAM 13628 / NBRC 14792 / USDA 110).